Here is a 421-residue protein sequence, read N- to C-terminus: Histidine--tRNA ligase (421 aa).

The protein belongs to the class-II aminoacyl-tRNA synthetase family. In terms of assembly, homodimer.

The protein resides in the cytoplasm. It catalyses the reaction tRNA(His) + L-histidine + ATP = L-histidyl-tRNA(His) + AMP + diphosphate + H(+). In Ureaplasma urealyticum serovar 10 (strain ATCC 33699 / Western), this protein is Histidine--tRNA ligase.